We begin with the raw amino-acid sequence, 467 residues long: Glycosyl hydrolase family 109 protein (467 aa).

Positions M1–A31 form a signal peptide, tat-type signal. NAD(+)-binding positions include Q66 to R67, D88, W137 to H140, E157 to V158, and N186. Substrate contacts are provided by residues Y215, R234, Y246–H249, and Y328. Position 246 (Y246) interacts with NAD(+).

Belongs to the Gfo/Idh/MocA family. Glycosyl hydrolase 109 subfamily. NAD(+) is required as a cofactor. Predicted to be exported by the Tat system. The position of the signal peptide cleavage has not been experimentally proven.

In terms of biological role, glycosidase. This is Glycosyl hydrolase family 109 protein from Shewanella woodyi (strain ATCC 51908 / MS32).